The following is a 119-amino-acid chain: Transcription and mRNA export factor SUS1 (119 aa).

It belongs to the ENY2 family. As to quaternary structure, component of the nuclear pore complex (NPC)-associated TREX-2 complex (transcription and export complex 2), composed of at least SUS1, SAC3, THP1, SEM1, and CDC31. TREX-2 contains 2 SUS1 chains. The TREX-2 complex interacts with the nucleoporin NUP1. Component of the 1.8 MDa SAGA transcription coactivator-HAT complex. SAGA is built of 5 distinct domains with specialized functions. Within the SAGA complex, SUS1, SGF11, SGF73 and UBP8 form an additional subcomplex of SAGA called the DUB module (deubiquitination module). Interacts directly with THP1, SAC3, SGF11, and with the RNA polymerase II.

The protein resides in the nucleus. The protein localises to the nucleoplasm. Its subcellular location is the cytoplasm. It is found in the P-body. In terms of biological role, involved in mRNA export coupled transcription activation by association with both the TREX-2 and the SAGA complexes. At the promoters, SAGA is required for recruitment of the basal transcription machinery. It influences RNA polymerase II transcriptional activity through different activities such as TBP interaction and promoter selectivity, interaction with transcription activators, and chromatin modification through histone acetylation and deubiquitination. Within the SAGA complex, participates in a subcomplex required for deubiquitination of H2B and for the maintenance of steady-state H3 methylation levels. The TREX-2 complex functions in docking export-competent ribonucleoprotein particles (mRNPs) to the nuclear entrance of the nuclear pore complex (nuclear basket). TREX-2 participates in mRNA export and accurate chromatin positioning in the nucleus by tethering genes to the nuclear periphery. May also be involved in cytoplasmic mRNA decay by interaction with components of P-bodies. The chain is Transcription and mRNA export factor SUS1 from Candida albicans (strain SC5314 / ATCC MYA-2876) (Yeast).